A 163-amino-acid chain; its full sequence is F-box protein At2g35280 (163 aa).

The F-box domain maps to 8–57 (ISRLEALPQDLLREIVAKIGVKSAEDYHNCILSCKELGASANDERVLKTL).

The chain is F-box protein At2g35280 from Arabidopsis thaliana (Mouse-ear cress).